The sequence spans 211 residues: C-type lectin domain family 2 member L (211 aa).

Residues 1-53 (MEPAREPPARARPPPPAARPAPAAPRPRSPAEAEARGPEGLLRRSGSGYEGST) form a disordered region. A compositionally biased stretch (pro residues) spans 10 to 28 (RARPPPPAARPAPAAPRPR). The residue at position 29 (Ser-29) is a Phosphoserine. A helical membrane pass occupies residues 66–86 (LLLGAIAVLLFAILVVMSILA). Intrachain disulfides connect Cys-97-Cys-108, Cys-125-Cys-205, and Cys-184-Cys-197. One can recognise a C-type lectin domain in the interval 104 to 206 (YGRKCYYFSE…CLTTRPWVCS (103 aa)).

It localises to the membrane. This is C-type lectin domain family 2 member L (Clec2l) from Rattus norvegicus (Rat).